The following is a 430-amino-acid chain: Glutamate-1-semialdehyde 2,1-aminomutase (430 aa).

Position 265 is an N6-(pyridoxal phosphate)lysine (K265).

Belongs to the class-III pyridoxal-phosphate-dependent aminotransferase family. HemL subfamily. Pyridoxal 5'-phosphate serves as cofactor.

Its subcellular location is the cytoplasm. It catalyses the reaction (S)-4-amino-5-oxopentanoate = 5-aminolevulinate. Its pathway is porphyrin-containing compound metabolism; protoporphyrin-IX biosynthesis; 5-aminolevulinate from L-glutamyl-tRNA(Glu): step 2/2. The polypeptide is Glutamate-1-semialdehyde 2,1-aminomutase (Caldivirga maquilingensis (strain ATCC 700844 / DSM 13496 / JCM 10307 / IC-167)).